The following is a 610-amino-acid chain: Elongation factor 4 (610 aa).

Residues 11–193 (ENIRNFSIIA…QIVEKVPAPS (183 aa)) form the tr-type G domain. Residues 23–28 (DHGKST) and 140–143 (NKID) each bind GTP.

The protein belongs to the TRAFAC class translation factor GTPase superfamily. Classic translation factor GTPase family. LepA subfamily.

The protein localises to the cell membrane. The enzyme catalyses GTP + H2O = GDP + phosphate + H(+). Functionally, required for accurate and efficient protein synthesis under certain stress conditions. May act as a fidelity factor of the translation reaction, by catalyzing a one-codon backward translocation of tRNAs on improperly translocated ribosomes. Back-translocation proceeds from a post-translocation (POST) complex to a pre-translocation (PRE) complex, thus giving elongation factor G a second chance to translocate the tRNAs correctly. Binds to ribosomes in a GTP-dependent manner. This chain is Elongation factor 4, found in Streptococcus equi subsp. zooepidemicus (strain MGCS10565).